The sequence spans 349 residues: tRNA pseudouridine synthase D (349 aa).

Phe27 provides a ligand contact to substrate. Catalysis depends on Asp80, which acts as the Nucleophile. A substrate-binding site is contributed by Asn129. In terms of domain architecture, TRUD spans 155–303 (GVPNYFGAQR…VEAARRAMLL (149 aa)). Phe329 serves as a coordination point for substrate.

The protein belongs to the pseudouridine synthase TruD family.

It catalyses the reaction uridine(13) in tRNA = pseudouridine(13) in tRNA. Its function is as follows. Responsible for synthesis of pseudouridine from uracil-13 in transfer RNAs. The polypeptide is tRNA pseudouridine synthase D (Citrobacter koseri (strain ATCC BAA-895 / CDC 4225-83 / SGSC4696)).